The chain runs to 703 residues: MAANMYRVGDYVYFENSSSNPYLIRRIEELNKTANGNVEAKVVCFYRRRDISSSLIALADKHATLSVCYRAGPGADTGEEGEVEEEVENPEMVDLPEKLKHQLRHRELFLSRQLESLPATHIRGKCSVTLLNETESLKSYLEREDFFFYSLVYDPQQKTLLADKGEIRVGNRYQADITDLLKDGEEDGRDQSKLETKVWEAHNPLVDKQIDQFLVVARSVGTFARALDCSSSVRQPSLHMSAAAASRDITLFHAMDTLHKNIYDISKAISALVPQGGPVLCRDEMEEWSASEANLFEEALEKYGKDFTDIQQDFLPWKSLTSIIEYYYMWKTTDRYVQQKRLKAAEAESKLKQVYIPNYNKPNPNQISVNSVKASVVNGTGTPGQSPGAGRACESCYTTQSYQWYSWGPPNMQCRLCASCWTYWKKYGGLKMPTRLDGERPGPNRNNMSPHGIPARSSGSPKFAMKTRQAFYLHTTKLTRIARRLCREILRPWHAARHPYMPINSAAIKAECTARLPEASQSPLVLKQVVRKPLEAVLRYLETHPRPPKPDPVKSSSSVLSSLTPAKSAPVINNGSPTILGKRSYEQHNGVDGLANHGQTRHMGPSRNLLLNGKSYPTKVRLIRGGSLPPVKRRRMNWIDAPDDVFYMATEETRKIRKLLSSSETKRAARRPYKPIALRQSQALPLRPPPPAPVNDEPIVIED.

In terms of domain architecture, BAH spans 1-164; the sequence is MAANMYRVGD…PQQKTLLADK (164 aa). Residues 165-276 enclose the ELM2 domain; that stretch reads GEIRVGNRYQ…KAISALVPQG (112 aa). K182 participates in a covalent cross-link: Glycyl lysine isopeptide (Lys-Gly) (interchain with G-Cter in ubiquitin). Residues 283-335 form the SANT domain; sequence DEMEEWSASEANLFEEALEKYGKDFTDIQQDFLPWKSLTSIIEYYYMWKTTDR. Residue S386 is modified to Phosphoserine. The segment at 393–420 adopts a GATA-type; atypical zinc-finger fold; that stretch reads CESCYTTQSYQWYSWGPPNMQCRLCASC. The tract at residues 437-460 is disordered; it reads DGERPGPNRNNMSPHGIPARSSGS. The residue at position 449 (S449) is a Phosphoserine. K509 participates in a covalent cross-link: Glycyl lysine isopeptide (Lys-Gly) (interchain with G-Cter in SUMO2 and SUMO3). S522 is subject to Phosphoserine. Residues 542–552 show a composition bias toward basic and acidic residues; the sequence is ETHPRPPKPDP. Residues 542 to 583 are disordered; sequence ETHPRPPKPDPVKSSSSVLSSLTPAKSAPVINNGSPTILGKR. Residues 545–552 carry the SH3-binding motif; sequence PRPPKPDP. K549 is covalently cross-linked (Glycyl lysine isopeptide (Lys-Gly) (interchain with G-Cter in SUMO2)). Low complexity predominate over residues 553-565; that stretch reads VKSSSSVLSSLTP. A Phosphothreonine modification is found at T564. Position 576 is a phosphoserine (S576). At T578 the chain carries Phosphothreonine. Position 614 is an N6-acetyllysine; alternate (K614). Residue K614 forms a Glycyl lysine isopeptide (Lys-Gly) (interchain with G-Cter in ubiquitin); alternate linkage. Position 627 is a phosphoserine (S627). An interaction with RBBP4 region spans residues 644–674; it reads DVFYMATEETRKIRKLLSSSETKRAARRPYK. Residues 661–703 form a disordered region; the sequence is SSSETKRAARRPYKPIALRQSQALPLRPPPPAPVNDEPIVIED. The SH3-binding signature appears at 684-693; the sequence is LPLRPPPPAP. An SUMO interaction motif 1 (SIM); crucial for efficient sumoylation motif is present at residues 699–703; that stretch reads IVIED.

It belongs to the metastasis-associated protein family. As to quaternary structure, component of the nucleosome remodeling and deacetylase (NuRD) repressor complex, composed of core proteins MTA1, MTA2, MTA3, RBBP4, RBBP7, HDAC1, HDAC2, MBD2, MBD3, and peripherally associated proteins CDK2AP1, CDK2AP2, GATAD2A, GATAD2B, CHD3, CHD4 and CHD5. The exact stoichiometry of the NuRD complex is unknown, and some subunits such as MBD2 and MBD3, GATAD2A and GATAD2B, and CHD3, CHD4 and CHD5 define mutually exclusive NuRD complexes. Interacts with RBBP4; the interaction is direct. Interacts with BMAL1. Interacts with CLOCK. Interacts with COP1. Interacts with CSNK1G2 in the cytoplasm. Interacts with EP300. Interacts with HDAC2. Interacts with ITGB3BP/CENPR. Interacts with MBD3L2. Interacts with MDM2. Interacts with NACC2. Interacts with p53/TP53. Interacts with PIAS1. Interacts with PIAS3. Interacts with PIAS4. Interacts with PWWP2A. Interacts with PWWP2B. Interacts with SENP1. Interacts with SENP2. Interacts with SIX3; facilitates the binding of SIX3 to the core DNA motif of SIX3 promoter. Interacts with SUMO1. Interacts with SUMO2. Interacts with TFCP2L1; which is indispensable for TFCP2L1-mediated self-renewal-promoting effect and endoderm-inhibiting action. Interacts with TFAP2C. Interacts with TPR. Interacts with UBE2I/UBC9. Phosphorylation by CSNK1G2/CK1 triggered by estrogen enhances corepression of estrogen receptor (ER). In terms of processing, acetylation is essential for its transcriptional coactivator activity. Post-translationally, sumoylation positively regulates its transcriptional corepressor activity but does not affect the protein stability. Sumoylated preferentially by SUMO2 or SUMO3 than SUMO1. Sumoylation is enhanced by PIAS1/3/4 and preferentially sumoylated by SUMO2 in the presence of PIAS1/3/4. Desumoylated by SENP1. Ubiquitinated by COP1, which leads to proteasomal degradation. In terms of tissue distribution, isoform 1 abundant in testis and expressed at low levels in brain, heart, lung, liver, and kidney. Isoform 2 abundant in adrenal gland, brain, colon, heart, liver, lung, muscle, prostate, stomach, testis, and thymus and expressed at low levels in duodenum, kidney, pancreas, parotid, and spleen.

Its subcellular location is the nucleus. It is found in the nucleus envelope. The protein localises to the cytoplasm. The protein resides in the cytoskeleton. It localises to the rough endoplasmic reticulum. Its subcellular location is the golgi apparatus. It is found in the zymogen granule. Transcriptional coregulator which can act as both a transcriptional corepressor and coactivator. Acts as a component of the histone deacetylase NuRD complex which participates in the remodeling of chromatin. In the NuRD complex, regulates transcription of its targets by modifying the acetylation status of the target chromatin and cofactor accessibility to the target DNA. In conjunction with other components of NuRD, acts as a transcriptional corepressor of BRCA1, ESR1, TFF1 and CDKN1A. Acts as a transcriptional coactivator of BCAS3, and SUMO2, independent of the NuRD complex. Stimulates the expression of WNT1 by inhibiting the expression of its transcriptional corepressor SIX3. Regulates p53-dependent and -independent DNA repair processes following genotoxic stress. Regulates the stability and function of p53/TP53 by inhibiting its ubiquitination by COP1 and MDM2 thereby regulating the p53-dependent DNA repair. Plays a role in the regulation of the circadian clock and is essential for the generation and maintenance of circadian rhythms under constant light and for normal entrainment of behavior to light-dark (LD) cycles. Positively regulates the CLOCK-BMAL1 heterodimer mediated transcriptional activation of its own transcription and the transcription of CRY1. Regulates deacetylation of BMAL1 by regulating SIRT1 expression, resulting in derepressing CRY1-mediated transcription repression. With TFCP2L1, promotes establishment and maintenance of pluripotency in embryonic stem cells (ESCs) and inhibits endoderm differentiation. The protein is Metastasis-associated protein MTA1 (Mta1) of Rattus norvegicus (Rat).